The primary structure comprises 381 residues: Adenylate cyclase (381 aa).

The disordered stretch occupies residues 1–30 (MTVDDTGSGADGDGRVDPEPAPDSADPGED). One can recognise a Guanylate cyclase domain in the interval 191-300 (AVGFADLVGF…TTVNLASRLT (110 aa)). Mg(2+)-binding residues include aspartate 196 and aspartate 240.

It belongs to the adenylyl cyclase class-3 family. Mg(2+) serves as cofactor.

The catalysed reaction is ATP = 3',5'-cyclic AMP + diphosphate. The sequence is that of Adenylate cyclase (cya) from Streptomyces coelicolor (strain ATCC BAA-471 / A3(2) / M145).